Reading from the N-terminus, the 618-residue chain is Dihydroxy-acid dehydratase (618 aa).

Asp81 contributes to the Mg(2+) binding site. Residue Cys122 coordinates [2Fe-2S] cluster. Asp123 and Lys124 together coordinate Mg(2+). An N6-carboxylysine modification is found at Lys124. Cys195 contacts [2Fe-2S] cluster. Glu492 contributes to the Mg(2+) binding site. Residue Ser518 is the Proton acceptor of the active site.

It belongs to the IlvD/Edd family. As to quaternary structure, homodimer. [2Fe-2S] cluster serves as cofactor. Mg(2+) is required as a cofactor.

It carries out the reaction (2R)-2,3-dihydroxy-3-methylbutanoate = 3-methyl-2-oxobutanoate + H2O. The catalysed reaction is (2R,3R)-2,3-dihydroxy-3-methylpentanoate = (S)-3-methyl-2-oxopentanoate + H2O. Its pathway is amino-acid biosynthesis; L-isoleucine biosynthesis; L-isoleucine from 2-oxobutanoate: step 3/4. It participates in amino-acid biosynthesis; L-valine biosynthesis; L-valine from pyruvate: step 3/4. Its function is as follows. Functions in the biosynthesis of branched-chain amino acids. Catalyzes the dehydration of (2R,3R)-2,3-dihydroxy-3-methylpentanoate (2,3-dihydroxy-3-methylvalerate) into 2-oxo-3-methylpentanoate (2-oxo-3-methylvalerate) and of (2R)-2,3-dihydroxy-3-methylbutanoate (2,3-dihydroxyisovalerate) into 2-oxo-3-methylbutanoate (2-oxoisovalerate), the penultimate precursor to L-isoleucine and L-valine, respectively. The protein is Dihydroxy-acid dehydratase of Zymomonas mobilis subsp. mobilis (strain ATCC 31821 / ZM4 / CP4).